A 326-amino-acid polypeptide reads, in one-letter code: Protease inhibitor (326 aa).

The signal sequence occupies residues 1–24; the sequence is MKTIRTGMMTLAALAVLGTNVVSA. 2 consecutive repeat copies span residues 177 to 208 and 272 to 304. The interval 177-304 is 2 X 32 AA approximate repeats; sequence IILHVDKETK…DLKAEMKVFA (128 aa).

In terms of processing, proteolytically cleaved to yield at least three forms (BBRPI-A, -B, and -C).

It is found in the secreted. Shows inhibitory activity towards serine proteases, such as trypsin, chymotrypsin and subtilisin. May form a trypsin-inhibitor complex in a molar ratio of 1:1. In Brevibacillus choshinensis, this protein is Protease inhibitor.